The following is a 94-amino-acid chain: MRKYETVFILNPTLDEEGYKANVEKFKGVIENAGGTVDNVDLWGKRKLAYEVKKVSEGYYTLMNFTADTELPKELDRVFRITDTVIRHMIITQE.

The protein belongs to the bacterial ribosomal protein bS6 family.

Its function is as follows. Binds together with bS18 to 16S ribosomal RNA. In Clostridium botulinum (strain Hall / ATCC 3502 / NCTC 13319 / Type A), this protein is Small ribosomal subunit protein bS6.